We begin with the raw amino-acid sequence, 584 residues long: J protein JJJ2 (584 aa).

In terms of domain architecture, J spans 13–77; the sequence is TYYSILGLTS…DQKLRYDRDL (65 aa). Residues 216-312 are disordered; sequence YSEDPNSCLG…FSSGSHDSNL (97 aa). At Ser-229 the chain carries Phosphoserine. Residues 241–253 show a composition bias toward low complexity; that stretch reads QQQQQQQQQQQQQ. Residues 269-282 show a composition bias toward basic and acidic residues; that stretch reads KDNKESKRESRVSP. The span at 299 to 312 shows a compositional bias: polar residues; the sequence is KTSTFSSGSHDSNL.

The protein localises to the cytoplasm. Its subcellular location is the nucleus. In Saccharomyces cerevisiae (strain YJM789) (Baker's yeast), this protein is J protein JJJ2 (JJJ2).